Here is a 184-residue protein sequence, read N- to C-terminus: ATP synthase subunit b, chloroplastic (184 aa).

The chain crosses the membrane as a helical span at residues 27 to 49 (LATNPINLSVVLGVLIFFGKGVL).

This sequence belongs to the ATPase B chain family. F-type ATPases have 2 components, F(1) - the catalytic core - and F(0) - the membrane proton channel. F(1) has five subunits: alpha(3), beta(3), gamma(1), delta(1), epsilon(1). F(0) has four main subunits: a(1), b(1), b'(1) and c(10-14). The alpha and beta chains form an alternating ring which encloses part of the gamma chain. F(1) is attached to F(0) by a central stalk formed by the gamma and epsilon chains, while a peripheral stalk is formed by the delta, b and b' chains.

It localises to the plastid. Its subcellular location is the chloroplast thylakoid membrane. F(1)F(0) ATP synthase produces ATP from ADP in the presence of a proton or sodium gradient. F-type ATPases consist of two structural domains, F(1) containing the extramembraneous catalytic core and F(0) containing the membrane proton channel, linked together by a central stalk and a peripheral stalk. During catalysis, ATP synthesis in the catalytic domain of F(1) is coupled via a rotary mechanism of the central stalk subunits to proton translocation. Its function is as follows. Component of the F(0) channel, it forms part of the peripheral stalk, linking F(1) to F(0). This Lepidium virginicum (Virginia pepperweed) protein is ATP synthase subunit b, chloroplastic.